The following is a 225-amino-acid chain: Pathogenesis-related 5 protein Jun a 3.0101 (225 aa).

The first 26 residues, 1–26, serve as a signal peptide directing secretion; that stretch reads MARVSELAFLLAATLAISLHMQEAGV. 8 disulfides stabilise this stretch: Cys35–Cys224, Cys76–Cys86, Cys91–Cys97, Cys139–Cys213, Cys144–Cys197, Cys152–Cys162, Cys166–Cys175, and Cys176–Cys184. IgE-binding stretches follow at residues 146–157, 158–170, and 178–191; these read ADINAVCPSELK, VDGG…NVFK, and NAYV…NYSK.

It belongs to the thaumatin family. As to expression, expressed in pollen (at protein level).

The chain is Pathogenesis-related 5 protein Jun a 3.0101 from Juniperus ashei (Ozark white cedar).